A 349-amino-acid chain; its full sequence is Hydroxymethylglutaryl-CoA synthase (349 aa).

Residues Asp-29 and Ala-30 each contribute to the (3S)-3-hydroxy-3-methylglutaryl-CoA site. The active-site Proton donor/acceptor is Glu-81. Positions 113 and 154 each coordinate (3S)-3-hydroxy-3-methylglutaryl-CoA. The Acyl-thioester intermediate role is filled by Cys-113. Arg-202 is a binding site for CoA. 2 residues coordinate (3S)-3-hydroxy-3-methylglutaryl-CoA: Thr-204 and His-237. His-237 acts as the Proton donor/acceptor in catalysis. Lys-242 serves as a coordination point for CoA. The (3S)-3-hydroxy-3-methylglutaryl-CoA site is built by Lys-246, Asn-269, and Ser-299.

Belongs to the thiolase-like superfamily. Archaeal HMG-CoA synthase family. In terms of assembly, interacts with acetoacetyl-CoA thiolase that catalyzes the precedent step in the pathway and with a DUF35 protein. The acetoacetyl-CoA thiolase/HMG-CoA synthase complex channels the intermediate via a fused CoA-binding site, which allows for efficient coupling of the endergonic thiolase reaction with the exergonic HMGCS reaction.

It carries out the reaction acetoacetyl-CoA + acetyl-CoA + H2O = (3S)-3-hydroxy-3-methylglutaryl-CoA + CoA + H(+). Its pathway is metabolic intermediate biosynthesis; (R)-mevalonate biosynthesis; (R)-mevalonate from acetyl-CoA: step 2/3. Catalyzes the condensation of acetyl-CoA with acetoacetyl-CoA to form 3-hydroxy-3-methylglutaryl-CoA (HMG-CoA). Functions in the mevalonate (MVA) pathway leading to isopentenyl diphosphate (IPP), a key precursor for the biosynthesis of isoprenoid compounds that are building blocks of archaeal membrane lipids. In Methanosarcina barkeri (strain Fusaro / DSM 804), this protein is Hydroxymethylglutaryl-CoA synthase.